Reading from the N-terminus, the 207-residue chain is dTTP/UTP pyrophosphatase (207 aa).

The active-site Proton acceptor is D87.

This sequence belongs to the Maf family. YhdE subfamily. It depends on a divalent metal cation as a cofactor.

The protein localises to the cytoplasm. The catalysed reaction is dTTP + H2O = dTMP + diphosphate + H(+). The enzyme catalyses UTP + H2O = UMP + diphosphate + H(+). In terms of biological role, nucleoside triphosphate pyrophosphatase that hydrolyzes dTTP and UTP. May have a dual role in cell division arrest and in preventing the incorporation of modified nucleotides into cellular nucleic acids. The sequence is that of dTTP/UTP pyrophosphatase from Ralstonia nicotianae (strain ATCC BAA-1114 / GMI1000) (Ralstonia solanacearum).